Consider the following 531-residue polypeptide: Importin subunit alpha-2 (531 aa).

A compositionally biased stretch (polar residues) spans 1 to 10; sequence MTLTETSLSH. The segment at 1–88 is disordered; that stretch reads MTLTETSLSH…ISHQQSSTRL (88 aa). The IBB domain maps to 5–67; sequence ETSLSHNAEE…RNIVDVDEGG (63 aa). Composition is skewed to basic and acidic residues over residues 11–20 and 29–50; these read NAEEGKDEGG and TKHE…KQKG. Residues 62–75 are compositionally biased toward acidic residues; that stretch reads DVDEGGNSESELEE. 7 ARM repeats span residues 122-161, 164-203, 250-290, 293-331, 334-374, 377-416, and 420-459; these read NPPI…NIVS, TEQT…NIAG, KNPH…YLTD, DEQI…NVAT, DSLT…NIIA, QKQI…NLAQ, and NRQV…TLML. The segment at 511-531 is disordered; sequence DDAGEKESHENADPQDNKWSF. Basic and acidic residues predominate over residues 515–531; it reads EKESHENADPQDNKWSF.

Belongs to the importin alpha family. Forms a complex with an importin beta subunit. Interacts with akir-1. In terms of tissue distribution, germline tissues. Expressed exclusively in germ line cells from the early embryonic through adult stages.

The protein localises to the cytoplasm. It localises to the nucleus. It is found in the nucleus envelope. Functionally, nuclear transport receptor that mediates nuclear import of proteins, and which is involved in sister chromatid cohesion. Binds specifically and directly to substrates containing either a simple or bipartite nuclear localization signals (NLS) motif. Promotes docking of import substrates to the nuclear envelope. Together with akir-1 adapter, required for the import and load of cohesin complex proteins in meiotic nuclei. The polypeptide is Importin subunit alpha-2 (Caenorhabditis elegans).